We begin with the raw amino-acid sequence, 320 residues long: Aspartate carbamoyltransferase catalytic subunit (320 aa).

Residues R68 and T69 each coordinate carbamoyl phosphate. K96 lines the L-aspartate pocket. Carbamoyl phosphate-binding residues include R118, H148, and Q151. Residues R181 and R236 each coordinate L-aspartate. G277 and P278 together coordinate carbamoyl phosphate.

This sequence belongs to the aspartate/ornithine carbamoyltransferase superfamily. ATCase family. Heterododecamer (2C3:3R2) of six catalytic PyrB chains organized as two trimers (C3), and six regulatory PyrI chains organized as three dimers (R2).

The catalysed reaction is carbamoyl phosphate + L-aspartate = N-carbamoyl-L-aspartate + phosphate + H(+). Its pathway is pyrimidine metabolism; UMP biosynthesis via de novo pathway; (S)-dihydroorotate from bicarbonate: step 2/3. In terms of biological role, catalyzes the condensation of carbamoyl phosphate and aspartate to form carbamoyl aspartate and inorganic phosphate, the committed step in the de novo pyrimidine nucleotide biosynthesis pathway. This chain is Aspartate carbamoyltransferase catalytic subunit, found in Delftia acidovorans (strain DSM 14801 / SPH-1).